The sequence spans 261 residues: Tryptophan synthase alpha chain (261 aa).

Active-site proton acceptor residues include Glu47 and Asp58.

This sequence belongs to the TrpA family. As to quaternary structure, tetramer of two alpha and two beta chains.

It catalyses the reaction (1S,2R)-1-C-(indol-3-yl)glycerol 3-phosphate + L-serine = D-glyceraldehyde 3-phosphate + L-tryptophan + H2O. Its pathway is amino-acid biosynthesis; L-tryptophan biosynthesis; L-tryptophan from chorismate: step 5/5. Its function is as follows. The alpha subunit is responsible for the aldol cleavage of indoleglycerol phosphate to indole and glyceraldehyde 3-phosphate. In Neisseria gonorrhoeae (strain ATCC 700825 / FA 1090), this protein is Tryptophan synthase alpha chain.